A 309-amino-acid chain; its full sequence is Coproporphyrin III ferrochelatase (309 aa).

Residues tyrosine 12, arginine 29, 45–46 (RY), serine 53, and tyrosine 124 contribute to the Fe-coproporphyrin III site. Fe(2+) is bound by residues histidine 182 and glutamate 263.

Belongs to the ferrochelatase family.

It localises to the cytoplasm. It catalyses the reaction Fe-coproporphyrin III + 2 H(+) = coproporphyrin III + Fe(2+). It participates in porphyrin-containing compound metabolism; protoheme biosynthesis. Functionally, involved in coproporphyrin-dependent heme b biosynthesis. Catalyzes the insertion of ferrous iron into coproporphyrin III to form Fe-coproporphyrin III. This is Coproporphyrin III ferrochelatase from Listeria monocytogenes serotype 4b (strain F2365).